A 275-amino-acid chain; its full sequence is Beta-lactamase OXA-15 (275 aa).

An N-terminal signal peptide occupies residues 1–21 (MAIRIFAILFSIFSLATFAHA). The Acyl-ester intermediate role is filled by Ser-72. At Lys-75 the chain carries N6-carboxylysine. A substrate-binding site is contributed by 210–212 (KTG).

The protein belongs to the class-D beta-lactamase family.

The enzyme catalyses a beta-lactam + H2O = a substituted beta-amino acid. Hydrolyzes oxacillin, first-generation cephalosporins and ceftazidime. Does not hydrolyze cefotaxime or carbapenems. The chain is Beta-lactamase OXA-15 (bla) from Pseudomonas aeruginosa.